Reading from the N-terminus, the 131-residue chain is Profilin-1 (131 aa).

This sequence belongs to the profilin family. As to quaternary structure, occurs in many kinds of cells as a complex with monomeric actin in a 1:1 ratio. As to expression, cytoplasmic distribution in hypocotyls. In root nodules, it is found in all cells, but is more abundant in the vascular tissue as well as the endodermis.

The protein localises to the cytoplasm. Its subcellular location is the cytoskeleton. Functionally, binds to actin and affects the structure of the cytoskeleton. At high concentrations, profilin prevents the polymerization of actin, whereas it enhances it at low concentrations. By binding to PIP2, it inhibits the formation of IP3 and DG. This is Profilin-1 from Phaseolus vulgaris (Kidney bean).